A 190-amino-acid chain; its full sequence is Putative manganese efflux pump MntP (190 aa).

The next 6 membrane-spanning stretches (helical) occupy residues 3-23 (PASI…AAVG), 39-59 (IGLI…FIGQ), 65-85 (VANW…LHMI), 106-128 (WLLA…GLAF), 133-155 (IWVA…VMLG), and 157-177 (AIGT…LIIV).

The protein belongs to the MntP (TC 9.B.29) family.

It is found in the cell inner membrane. In terms of biological role, probably functions as a manganese efflux pump. This is Putative manganese efflux pump MntP from Pseudomonas fluorescens (strain ATCC BAA-477 / NRRL B-23932 / Pf-5).